The following is a 415-amino-acid chain: G patch domain-containing protein 4 (415 aa).

The residue at position 1 (Met-1) is an N-acetylmethionine. The residue at position 4 (Thr-4) is a Phosphothreonine. Residues 11 to 57 (GMKFAEEQLLKHGWTQGKGLGRRENGITQALKVTLKQDNHGVGHDPA) form the G-patch domain. Lys-46 participates in a covalent cross-link: Glycyl lysine isopeptide (Lys-Gly) (interchain with G-Cter in SUMO2). Phosphothreonine is present on Thr-116. Disordered regions lie at residues 116-141 (TSGE…TPPK) and 191-415 (LGTS…VDLS). A compositionally biased stretch (basic and acidic residues) spans 118 to 141 (GEEKPDRDLGNCSDVDNHEPTPPK). Ser-130 carries the phosphoserine modification. Positions 191–201 (LGTSQPLTDSE) are enriched in polar residues. Over residues 224–239 (SLGDELLGHTDRSFRD) the composition is skewed to basic and acidic residues. Ser-258 carries the phosphoserine modification. Residues 335-345 (EDLDTQEEEGK) are compositionally biased toward acidic residues. The span at 353-364 (RKVRRKDKRKRQ) shows a compositional bias: basic residues. The span at 387-397 (AGERSRQYPKE) shows a compositional bias: basic and acidic residues. Positions 398 to 407 (RAKKKKRKRD) are enriched in basic residues.

This chain is G patch domain-containing protein 4 (Gpatch4), found in Mus musculus (Mouse).